The following is a 474-amino-acid chain: Nucleobindin-1 (474 aa).

A signal peptide spans 1 to 24 (MPPSGPRAALFLLPSLLLLRAVLA). Phosphoserine is present on Ser-83. A Phosphothreonine modification is found at Thr-145. The stretch at 147 to 215 (EARDLELLIQ…QQRRHREHPK (69 aa)) forms a coiled coil. The segment covering 190–207 (SLGEEQRKEAERKLEEQQ) has biased composition (basic and acidic residues). The segment at 190-218 (SLGEEQRKEAERKLEEQQRRHREHPKVNV) is disordered. The interval 225–318 (LKEVWEELDG…VTLEEFLAST (94 aa)) is binds to GNAI2 and GNAI3. EF-hand domains are found at residues 237-272 (PNRFNPKTFFILHDINSDGVLDEQELEALFTKELEK) and 289-324 (ERLRMREHVMKNVDTNQDRLVTLEEFLASTQRKEFG). Ca(2+)-binding residues include Asp-250, Asn-252, Asp-254, Glu-261, Asp-302, Asn-304, Asp-306, and Glu-313. The short motif at 300–330 (NVDTNQDRLVTLEEFLASTQRKEFGDTGEGW) is the GBA element. The stretch at 355-422 (AYTEEELRRF…RKQQQQSHNN (68 aa)) forms a coiled coil. The disordered stretch occupies residues 382–474 (LSQETEALGR…EPPQLDSQHL (93 aa)). Ser-383 is subject to Phosphoserine. Positions 448–460 (DQKDVDASEKKVP) are enriched in basic and acidic residues. Phosphoserine is present on Ser-471.

Belongs to the nucleobindin family. As to quaternary structure, interacts (via GBA motif) with guanine nucleotide-binding protein G(i) alpha subunits GNAI1, GNAI2 and GNAI3 with higher affinity for GNAI1 and GNAI3 than for GNAI2. Preferentially interacts with inactive rather than active GNAI3. Interaction with GNAI3 is inhibited when NUCB1 binds calcium, probably due to a conformational change which renders the GBA motif inaccessible. Expressed in bone where it is detected in the soft tissue in the center of the osteon and in the osteocyte lacuna (at protein level).

It is found in the golgi apparatus. The protein localises to the cis-Golgi network membrane. It localises to the cytoplasm. Its subcellular location is the secreted. Functionally, major calcium-binding protein of the Golgi which may have a role in calcium homeostasis. Acts as a non-receptor guanine nucleotide exchange factor which binds to and activates alpha subunits of guanine nucleotide-binding proteins (G proteins). This chain is Nucleobindin-1 (NUCB1), found in Bos taurus (Bovine).